The following is a 132-amino-acid chain: GLSDSEKSAVASLWEKIAPQTNKLGAESMERLFKNHPETKSFFSRFDISPGSQDLLTHGGKIFGALGEAIKSLDNLQKYQDLHTNKLKLSSDHMKLLSAAIIEVFTAHFGGEVNQAAWNKFLGEVGAILTSS.

Residues 1–132 (GLSDSEKSAV…GEVGAILTSS (132 aa)) form the Globin domain. Heme b contacts are provided by His-58 and His-83.

Belongs to the globin family. Monomer.

This hemoglobin may replace myocardial myoglobin in this amphibian species. The sequence is that of Hemoglobin heart muscle subunit alpha-type from Aquarana catesbeiana (American bullfrog).